The primary structure comprises 251 residues: Probable transcriptional regulatory protein BLA_1344 (251 aa).

Belongs to the TACO1 family.

It is found in the cytoplasm. The polypeptide is Probable transcriptional regulatory protein BLA_1344 (Bifidobacterium animalis subsp. lactis (strain AD011)).